Reading from the N-terminus, the 710-residue chain is Early transcription factor 82 kDa subunit (710 aa).

Belongs to the poxviridae VETF large subunit family. As to quaternary structure, heterodimer of a 70 kDa and a 82 kDa subunit. Part of the early transcription complex composed of ETF, RAP94/OPG109, and the DNA-directed RNA polymerase.

It localises to the virion. In terms of biological role, acts with RNA polymerase to initiate transcription from early gene promoters. Is recruited by the RPO-associated protein of 94 kDa RAP94/OPG109 to form the early transcription complex, which also contains the core RNA polymerase. ETF heterodimer binds to early gene promoters. This Monkeypox virus protein is Early transcription factor 82 kDa subunit (OPG133).